We begin with the raw amino-acid sequence, 278 residues long: uncharacterized protein (278 aa).

Belongs to the short-chain dehydrogenases/reductases (SDR) family.

This is an uncharacterized protein from Bacillus subtilis (strain 168).